Reading from the N-terminus, the 327-residue chain is Thiamine-binding periplasmic protein (327 aa).

The N-terminal stretch at 1 to 18 (MLKKCLPLLLLCTAPVFA) is a signal peptide. Thiamine is bound by residues 59 to 60 (DG), 161 to 162 (ST), Trp-197, and 215 to 218 (YTTS).

It belongs to the bacterial solute-binding protein 1 family. Monomer in solution. The complex is composed of two ATP-binding proteins (ThiQ), two transmembrane proteins (ThiP) and a solute-binding protein (ThiB).

It is found in the periplasm. Its activity is regulated as follows. Transport is inhibited by the sulfhydryl-specific modifier N-ethylmaleimide. In terms of biological role, part of the ABC transporter complex ThiBPQ involved in thiamine import. Binds thiamine, thiamine phosphate and thiamine diphosphate with high affinity. This is Thiamine-binding periplasmic protein (thiB) from Escherichia coli (strain K12).